The following is a 192-amino-acid chain: Adenylate kinase (192 aa).

Gly10 to Thr15 is a binding site for ATP. An NMP region spans residues Ser30–Val59. Residues Thr31, Arg36, Gln57–Val59, Gly85–Arg88, and Gln92 contribute to the AMP site. The interval Asn126–Asp142 is LID. Arg127 lines the ATP pocket. AMP-binding residues include Arg139 and Arg150. Ala178 serves as a coordination point for ATP.

It belongs to the adenylate kinase family. As to quaternary structure, monomer.

It is found in the cytoplasm. It carries out the reaction AMP + ATP = 2 ADP. Its pathway is purine metabolism; AMP biosynthesis via salvage pathway; AMP from ADP: step 1/1. Functionally, catalyzes the reversible transfer of the terminal phosphate group between ATP and AMP. Plays an important role in cellular energy homeostasis and in adenine nucleotide metabolism. The polypeptide is Adenylate kinase (Rhizobium meliloti (strain 1021) (Ensifer meliloti)).